Reading from the N-terminus, the 194-residue chain is Imidazoleglycerol-phosphate dehydratase (194 aa).

It belongs to the imidazoleglycerol-phosphate dehydratase family.

It is found in the cytoplasm. The catalysed reaction is D-erythro-1-(imidazol-4-yl)glycerol 3-phosphate = 3-(imidazol-4-yl)-2-oxopropyl phosphate + H2O. Its pathway is amino-acid biosynthesis; L-histidine biosynthesis; L-histidine from 5-phospho-alpha-D-ribose 1-diphosphate: step 6/9. This Bacillus pumilus (strain SAFR-032) protein is Imidazoleglycerol-phosphate dehydratase.